Reading from the N-terminus, the 913-residue chain is SUN domain-containing protein 1 (913 aa).

The tract at residues 1–139 (MDFSRLHTYT…VLRHPVLDES (139 aa)) is LMNA-binding. Topologically, residues 1–415 (MDFSRLHTYT…LTRCLRNICK (415 aa)) are nuclear. Ser48 and Ser66 each carry phosphoserine. Positions 69–81 (SQAIDSHISTSRA) are enriched in polar residues. A disordered region spans residues 69–120 (SQAIDSHISTSRATPAKGRETRTVKQRRSASKPAFSINHLSGKGLSSSTSHD). Residues 108–120 (LSGKGLSSSTSHD) show a composition bias toward low complexity. Ser139 carries the phosphoserine modification. The interval 209 to 302 (SRVYSRDRTL…MTAGELSRVD (94 aa)) is SYNE2-binding. An EMD-binding region spans residues 223-302 (VSFYLDRTLW…MTAGELSRVD (80 aa)). The chain crosses the membrane as a helical span at residues 416–436 (VFVLLLPLLLLLGAGVSLWGQ). Over 437 to 913 (GNFFSLLPVL…RFRVHGEPIQ (477 aa)) the chain is Perinuclear space. The disordered stretch occupies residues 456 to 485 (RVDDSKGMHRPGPLPPSPPPKVDHKASQWP). Coiled coils occupy residues 491–533 (GQKV…EGLS) and 563–638 (HHDH…CEQA). A sufficient for interaction with SYNE1 and SYNE2 region spans residues 703 to 913 (TSEAIVSAVN…RFRVHGEPIQ (211 aa)). The SUN domain maps to 751–912 (GGSILSTRCS…YRFRVHGEPI (162 aa)).

Core component of the LINC complex which is composed of inner nuclear membrane SUN domain-containing proteins coupled to outer nuclear membrane KASH domain-containing nesprins. SUN and KASH domain-containing proteins seem to bind each other promiscuously; however, differentially expression of LINC complex constituents is giving rise to specific assemblies. At least SUN1/2-containing core LINC complexes are proposed to be hexameric composed of three protomers of each KASH and SUN domain-containing protein. Interacts with KASH5 (via the last 22 amino acids); this interaction mediates KASH5 telomere localization by forming a SUN1:KASH5 LINC complex. Isoform 5 is proposed to form a non-nuclear spermatogenesis-specific LINC complex with SYNE3 during sperm head formation. Interacts with SYNE2 and SYNE1; probably forming respective LINC complexes. Interacts with A-type lamin with a strong preference for unprocessed A-type lamin compared with the mature protein. Interaction with lamins B1 and C is hardly detectable. Interacts with NAT10. Interacts with EMD and TSNAX. Associates with the nuclear pore complex (NPC). Interacts with CCDC79/TERB1; promoting the accumulation of the LINC complex complexes at the telomere-nuclear envelope attachment sites. Interacts with IRAG2. Interacts (via KASH domain) with TMEM258. In terms of processing, the disulfide bond with KASH domain-containing nesprins is required for stability of the respective LINC complexes under tensile forces. As to expression, widely expressed. Expressed in cochlear outer hair cells (at protein level). Seven isoforms are expressed in testis including testis-specific isoform 5. Isoform 5 is the only isoform expressed at the end of sperm differentiation. Six isoforms are expressed in muscle, heart and brain, four isoforms in kidney and three isoforms in liver.

Its subcellular location is the nucleus inner membrane. The protein localises to the cytoplasmic vesicle. It is found in the secretory vesicle. The protein resides in the acrosome outer membrane. Its function is as follows. As a component of the LINC (LInker of Nucleoskeleton and Cytoskeleton) complex involved in the connection between the nuclear lamina and the cytoskeleton. The nucleocytoplasmic interactions established by the LINC complex play an important role in the transmission of mechanical forces across the nuclear envelope and in nuclear movement and positioning. Required for interkinetic nuclear migration (INM) and essential for nucleokinesis and centrosome-nucleus coupling during radial neuronal migration in the cerebral cortex and during glial migration. Involved in telomere attachment to nuclear envelope in the prophase of meiosis implicating a SUN1/2:KASH5 LINC complex in which SUN1 and SUN2 seem to act at least partial redundantly. Required for gametogenesis and involved in selective gene expression of coding and non-coding RNAs needed for gametogenesis. Helps to define the distribution of nuclear pore complexes (NPCs). Required for efficient localization of SYNE4 in the nuclear envelope. May be involved in nuclear remodeling during sperm head formation in spermatogenesis. May play a role in DNA repair by suppressing non-homologous end joining repair to facilitate the repair of DNA cross-links. Isoform 5 may be involved in nuclear remodeling during sperm head formation in spermatogenesis. A probable SUN1 isoform 5:SYNE3 LINC complex may tether spermatid nuclei to anterior cytoskeletal structures such as actin filaments present at membraneous junctions of spermatids and Sertoli cells. This is SUN domain-containing protein 1 from Mus musculus (Mouse).